A 440-amino-acid polypeptide reads, in one-letter code: Probable exopolygalacturonase C (440 aa).

The N-terminal stretch at 1 to 21 (MLITNPALLGILASLVPLALG) is a signal peptide. Residues Asn84 and Asn151 are each glycosylated (N-linked (GlcNAc...) asparagine). 3 PbH1 repeats span residues 188-210 (GDDITVSHAIVDATSTGGFPFNT), 217-238 (GTNISITDSVMFNGDDAIAVNT), and 240-261 (SHNIVFARNTIGYQSHGMSIGS). The N-linked (GlcNAc...) asparagine glycan is linked to Asn219. Asp231 acts as the Proton donor in catalysis. His255 is an active-site residue. Asn271 carries an N-linked (GlcNAc...) asparagine glycan. A PbH1 4 repeat occupies 272–293 (ITNLRFEDVTVIDALYAARFKS). N-linked (GlcNAc...) asparagine glycosylation occurs at Asn313. Cys389 and Cys395 are oxidised to a cystine. A glycan (N-linked (GlcNAc...) asparagine) is linked at Asn434.

This sequence belongs to the glycosyl hydrolase 28 family.

It localises to the secreted. The catalysed reaction is [(1-&gt;4)-alpha-D-galacturonosyl](n) + H2O = alpha-D-galacturonate + [(1-&gt;4)-alpha-D-galacturonosyl](n-1). Its function is as follows. Specific in hydrolyzing the terminal glycosidic bond of polygalacturonic acid and oligogalacturonates. The protein is Probable exopolygalacturonase C (pgxC) of Aspergillus fumigatus (strain CBS 144.89 / FGSC A1163 / CEA10) (Neosartorya fumigata).